We begin with the raw amino-acid sequence, 365 residues long: Transcription elongation factor, mitochondrial (365 aa).

The transit peptide at 1-40 (MAWRANLACLIKAGGRTRWFPLPEYLSMSPVLHNTCSRRK) directs the protein to the mitochondrion.

It belongs to the TEFM family. As to quaternary structure, interacts with POLRMT.

The protein resides in the mitochondrion matrix. It is found in the mitochondrion nucleoid. Functionally, transcription elongation factor which increases mitochondrial RNA polymerase processivity. Regulates transcription of the mitochondrial genome, including genes important for the oxidative phosphorylation machinery. This Rattus norvegicus (Rat) protein is Transcription elongation factor, mitochondrial (Tefm).